We begin with the raw amino-acid sequence, 257 residues long: Pyridoxine 5'-phosphate synthase (257 aa).

Asn6 lines the 3-amino-2-oxopropyl phosphate pocket. Asp8–His9 contributes to the 1-deoxy-D-xylulose 5-phosphate binding site. Arg17 is a 3-amino-2-oxopropyl phosphate binding site. His42 (proton acceptor) is an active-site residue. The 1-deoxy-D-xylulose 5-phosphate site is built by Arg44 and His49. Glu69 (proton acceptor) is an active-site residue. Position 99 (Thr99) interacts with 1-deoxy-D-xylulose 5-phosphate. Catalysis depends on His211, which acts as the Proton donor. 3-amino-2-oxopropyl phosphate is bound by residues Gly212 and Gly233–Gln234.

The protein belongs to the PNP synthase family. In terms of assembly, homooctamer; tetramer of dimers.

It is found in the cytoplasm. It catalyses the reaction 3-amino-2-oxopropyl phosphate + 1-deoxy-D-xylulose 5-phosphate = pyridoxine 5'-phosphate + phosphate + 2 H2O + H(+). It participates in cofactor biosynthesis; pyridoxine 5'-phosphate biosynthesis; pyridoxine 5'-phosphate from D-erythrose 4-phosphate: step 5/5. Functionally, catalyzes the complicated ring closure reaction between the two acyclic compounds 1-deoxy-D-xylulose-5-phosphate (DXP) and 3-amino-2-oxopropyl phosphate (1-amino-acetone-3-phosphate or AAP) to form pyridoxine 5'-phosphate (PNP) and inorganic phosphate. This Campylobacter fetus subsp. fetus (strain 82-40) protein is Pyridoxine 5'-phosphate synthase.